Here is a 341-residue protein sequence, read N- to C-terminus: Glycerol-3-phosphate dehydrogenase [NAD(P)+] (341 aa).

NADPH is bound by residues Ser15, Trp16, Arg36, and Lys110. Sn-glycerol 3-phosphate contacts are provided by Lys110, Gly139, and Ser141. Residue Ala143 coordinates NADPH. Residues Lys194, Asp247, Ser257, Arg258, and Asn259 each coordinate sn-glycerol 3-phosphate. Lys194 functions as the Proton acceptor in the catalytic mechanism. Residue Arg258 coordinates NADPH. The NADPH site is built by Val282 and Glu284.

This sequence belongs to the NAD-dependent glycerol-3-phosphate dehydrogenase family.

The protein localises to the cytoplasm. The enzyme catalyses sn-glycerol 3-phosphate + NAD(+) = dihydroxyacetone phosphate + NADH + H(+). The catalysed reaction is sn-glycerol 3-phosphate + NADP(+) = dihydroxyacetone phosphate + NADPH + H(+). The protein operates within membrane lipid metabolism; glycerophospholipid metabolism. Functionally, catalyzes the reduction of the glycolytic intermediate dihydroxyacetone phosphate (DHAP) to sn-glycerol 3-phosphate (G3P), the key precursor for phospholipid synthesis. The protein is Glycerol-3-phosphate dehydrogenase [NAD(P)+] of Stenotrophomonas maltophilia (strain R551-3).